Reading from the N-terminus, the 567-residue chain is Cytochrome P450 monooxygenase 231 (567 aa).

Residues Val3–Tyr23 form a helical membrane-spanning segment. 2 N-linked (GlcNAc...) asparagine glycosylation sites follow: Asn81 and Asn223. Cys475 lines the heme pocket.

This sequence belongs to the cytochrome P450 family. Heme serves as cofactor.

Its subcellular location is the membrane. The protein operates within secondary metabolite biosynthesis. Its function is as follows. Cytochrome P450 monooxygenase that is able to use anthracene, carbazole, pyrene, and phenanthrene as substrates for oxidation. These multifunctional properties against a series of polycyclic aromatic hydrocarbons (PAHs) suggest that CYP231 would play important roles, at least in part, in fungal metabolic systems involved in xenobiotic detoxification. The chain is Cytochrome P450 monooxygenase 231 from Postia placenta (strain ATCC 44394 / Madison 698-R) (Brown rot fungus).